The following is a 204-amino-acid chain: Thymidylate kinase (204 aa).

9–16 (GLDGAGKS) is an ATP binding site.

It belongs to the thymidylate kinase family.

It carries out the reaction dTMP + ATP = dTDP + ADP. Functionally, phosphorylation of dTMP to form dTDP in both de novo and salvage pathways of dTTP synthesis. The protein is Thymidylate kinase of Francisella philomiragia subsp. philomiragia (strain ATCC 25017 / CCUG 19701 / FSC 153 / O#319-036).